A 910-amino-acid polypeptide reads, in one-letter code: DNA mismatch repair protein MutS (910 aa).

Over residues 1–11 (MEAKVEEKEPE) the composition is skewed to basic and acidic residues. Positions 1–21 (MEAKVEEKEPEPVENAGPDAP) are disordered. 658–665 (GPNMGGKS) provides a ligand contact to ATP.

Belongs to the DNA mismatch repair MutS family.

This protein is involved in the repair of mismatches in DNA. It is possible that it carries out the mismatch recognition step. This protein has a weak ATPase activity. The polypeptide is DNA mismatch repair protein MutS (Brucella canis (strain ATCC 23365 / NCTC 10854 / RM-666)).